The sequence spans 794 residues: MAELPTSHLAAAVLTDGNRALVAVIAVVALAALVLAGVLVRQVLAAGEGTDSMKKIAAAVQEGANAYLARQLRTLGVFAVVVFFLLMLLPADDWNQRAGRSIFFLIGAAFSAATGYIGMWLAVRSNVRVAAAAREATPAPGEPEKDLALVSHKATKIAFRTGGVVGMFTVGLGLLGACCVVLVYAADAPKVLEGFGLGAALIAMFMRVGGGIFTKAADVGADLVGKVEQGIPEDDPRNAATIADNVGDNVGDCAGMAADLFESYAVTLVAALILGKVAFGDFGLAFPLLVPAIGVLTAMIGIFAVAPRRSDRSGMSAINRGFFISAVISLVLVAVAVFVYLPGKYADLDGVTDAAIAGKSGDPRILALVAVAIGIVLAALIQQLTGYFTETTRRPVKDIGKSSLTGPATVVLAGISLGLESAVYTALLIGLGVYGAFLLGGTSIMLALFAVALAGTGLLTTVGVIVAMDTFGPVSDNAQGIAEMSGDVEGAGAQVLTDLDAVGNTTKAITKGIAIATAVLAAAALFGSYRDAITTGAADVGEKLSGEGAPMTLMMDISQPNNLVGLIAGAAVVFLFSGLAINAVSRSAGAVVYEVRRQFRERPGIMDYSEKPEYGKVVDICTRDALRELATPGLLAVMAPIFIGFTLGVGALGAFLAGAIGAGTLMAVFLANSGGSWDNAKKLVEDGHHGGKGSEAHAATVIGDTVGDPFKDTAGPAINPLLKVMNLVALLIAPAVIKFSYGADKSVVVRVLIAVVAFAVIAAAVYVSKRRGIAMGDEDDADPEPKSADPAVVS.

A run of 5 helical transmembrane segments spans residues 20–40 (ALVA…GVLV), 74–94 (TLGV…ADDW), 102–122 (IFFL…MWLA), 163–183 (GVVG…VVLV), and 194–214 (GFGL…GIFT). Lysine 215 is a substrate binding site. Mg(2+) is bound by residues aspartate 218, aspartate 222, asparagine 245, and aspartate 248. The next 6 membrane-spanning stretches (helical) occupy residues 264-284 (YAVT…DFGL), 285-305 (AFPL…IFAV), 321-341 (GFFI…FVYL), 365-385 (ILAL…QQLT), 422-442 (AVYT…LGGT), and 446-466 (LALF…GVIV). Aspartate 476 is a binding site for Mg(2+). A run of 3 helical transmembrane segments spans residues 508–528 (AITK…LFGS), 564–584 (VGLI…INAV), and 641–661 (IFIG…GAIG). Ca(2+) contacts are provided by aspartate 678, aspartate 704, and aspartate 708. Lysine 711 contacts substrate. The next 2 helical transmembrane spans lie at 717–737 (AINP…PAVI) and 747–767 (VVVR…AVYV).

Belongs to the H(+)-translocating pyrophosphatase (TC 3.A.10) family. K(+)-insensitive subfamily. Homodimer. Mg(2+) serves as cofactor.

Its subcellular location is the cell membrane. It carries out the reaction diphosphate + H2O + H(+)(in) = 2 phosphate + 2 H(+)(out). In terms of biological role, proton pump that utilizes the energy of pyrophosphate hydrolysis as the driving force for proton movement across the membrane. Generates a proton motive force. This is K(+)-insensitive pyrophosphate-energized proton pump from Streptomyces coelicolor (strain ATCC BAA-471 / A3(2) / M145).